The primary structure comprises 36 residues: MTDLNLPSIFVPLVGLVFPAIAMASLSLHVQKNKIV.

The chain crosses the membrane as a helical span at residues 6-26 (LPSIFVPLVGLVFPAIAMASL).

Belongs to the PsaI family.

The protein resides in the plastid. It is found in the chloroplast thylakoid membrane. In terms of biological role, may help in the organization of the PsaL subunit. The sequence is that of Photosystem I reaction center subunit VIII from Drimys granadensis.